Reading from the N-terminus, the 261-residue chain is MASSKERENFVYVAKLAEQAERYDEMVEAMKNVANMDVELTVEERNLLSVGYKNVVGSRRASWRILSSIEQKEESRGNEQNVKRIKEYLQKVESELTNICNDIMVVIDQHLIPSCSAGESTVFYHKMKGDYYRYLAEFKAGNDKKEVAELSLKAYQAATTAAEAELAPTHPIRLGLALNFSVFYYEIMNSPERACHLAKQAFDEAISELDSLNEDSYKDSTLIMQLLRDNLTLWTSDLPEDAEDAQKGDATNKAGGGEDAE.

Positions 239 to 261 (PEDAEDAQKGDATNKAGGGEDAE) are disordered.

Belongs to the 14-3-3 family. Homodimer.

The polypeptide is 14-3-3 protein 9 (TFT9) (Solanum lycopersicum (Tomato)).